The chain runs to 364 residues: ERCC4 domain-containing protein EP364R (364 aa).

One can recognise an ERCC4 domain in the interval 3–102 (FLVADHREHH…QLYFFVEGPA (100 aa)). The segment covering 319-328 (ASRPATQPAA) has biased composition (polar residues). The segment at 319–352 (ASRPATQPAATQPLHEVSDDATSNASDTSSPIGH) is disordered. Residues 338–348 (DATSNASDTSS) show a composition bias toward low complexity.

It belongs to the asfivirus EP364R family.

Its function is as follows. Plays a role in the inhibition of type I interferon signaling pathway. Mechanistically, specifically interacts with 2',3'-cGAMP and cleaves it via its phosphodiesterase activity. In turn, prevents 2',3'-cGAMP interaction with host ER-resident STING1 leading to inhibition of downstream signaling pathway and type I interferon production. The sequence is that of ERCC4 domain-containing protein EP364R from African swine fever virus (strain Badajoz 1971 Vero-adapted) (Ba71V).